Here is a 401-residue protein sequence, read N- to C-terminus: cAMP-dependent protein kinase type II-alpha regulatory subunit (401 aa).

Serine 2 bears the N-acetylserine mark. Residues 2-135 are dimerization and phosphorylation; that stretch reads SHIQIPPGLT…RLQEACKDIL (134 aa). Serine 47, serine 74, serine 76, and serine 96 each carry phosphoserine. A disordered region spans residues 61-83; the sequence is ESSAVPVIEEDGESDSDSEDADL. The segment covering 68–83 has biased composition (acidic residues); the sequence is IEEDGESDSDSEDADL. Residues 136-257, glutamate 205, arginine 214, 258-401, glutamate 335, and arginine 344 each bind 3',5'-cyclic AMP; these read LFKN…ESVP and LFKS…DPGQ. Threonine 212 carries the phosphothreonine; by PDPK1 modification. Serine 347 and serine 392 each carry phosphoserine.

The protein belongs to the cAMP-dependent kinase regulatory chain family. As to quaternary structure, the inactive form of the enzyme is composed of two regulatory chains and two catalytic chains. Activation by cAMP produces two active catalytic monomers and a regulatory dimer that binds four cAMP molecules. Interacts with AKAP4. Interacts with CBFA2T3. Interacts with the phosphorylated form of PJA2. Interacts with MYRIP. This interaction may link PKA to components of the exocytosis machinery, thus facilitating exocytosis, including insulin release. Forms a complex composed of PRKAR2A, GSK3B and GSKIP through GSKIP interaction; facilitates PKA-induced phosphorylation and regulates GSK3B activity. Interacts with ADCY8; inhibits adenylate cyclase activity through PKA phosphorylation. Post-translationally, phosphorylated by the activated catalytic chain. In terms of tissue distribution, four types of regulatory chains are found: I-alpha, I-beta, II-alpha, and II-beta. Their expression varies among tissues and is in some cases constitutive and in others inducible.

The protein resides in the cytoplasm. The protein localises to the cell membrane. Functionally, regulatory subunit of the cAMP-dependent protein kinases involved in cAMP signaling in cells. Type II regulatory chains mediate membrane association by binding to anchoring proteins, including the MAP2 kinase. This Mus musculus (Mouse) protein is cAMP-dependent protein kinase type II-alpha regulatory subunit (Prkar2a).